The chain runs to 138 residues: Cellular retinoic acid-binding protein 2 (138 aa).

The Nuclear localization signal motif lies at 21–31; sequence KVLGVNVMLRK. A Glycyl lysine isopeptide (Lys-Gly) (interchain with G-Cter in SUMO) cross-link involves residue Lys102. 133–135 provides a ligand contact to all-trans-retinoate; sequence RVY.

The protein belongs to the calycin superfamily. Fatty-acid binding protein (FABP) family. In terms of assembly, interacts with RXR and RARA. Interacts with importin alpha. In terms of processing, sumoylated in response to retinoic acid binding, sumoylation is critical for dissociation from ER and subsequent nuclear translocation.

It localises to the cytoplasm. It is found in the endoplasmic reticulum. The protein resides in the nucleus. Its function is as follows. Transports retinoic acid to the nucleus. Regulates the access of retinoic acid to the nuclear retinoic acid receptors. The polypeptide is Cellular retinoic acid-binding protein 2 (CRABP2) (Homo sapiens (Human)).